Consider the following 428-residue polypeptide: Enolase (428 aa).

Gln164 is a binding site for (2R)-2-phosphoglycerate. The active-site Proton donor is the Glu206. Asp243, Glu286, and Asp313 together coordinate Mg(2+). (2R)-2-phosphoglycerate is bound by residues Lys338, Arg367, Ser368, and Lys389. Lys338 serves as the catalytic Proton acceptor.

The protein belongs to the enolase family. Mg(2+) is required as a cofactor.

The protein localises to the cytoplasm. It is found in the secreted. It localises to the cell surface. The catalysed reaction is (2R)-2-phosphoglycerate = phosphoenolpyruvate + H2O. The protein operates within carbohydrate degradation; glycolysis; pyruvate from D-glyceraldehyde 3-phosphate: step 4/5. Its function is as follows. Catalyzes the reversible conversion of 2-phosphoglycerate (2-PG) into phosphoenolpyruvate (PEP). It is essential for the degradation of carbohydrates via glycolysis. This chain is Enolase, found in Dehalococcoides mccartyi (strain ATCC BAA-2266 / KCTC 15142 / 195) (Dehalococcoides ethenogenes (strain 195)).